Here is a 195-residue protein sequence, read N- to C-terminus: RILP-like protein 2 (195 aa).

Positions 8-92 constitute an RH1 domain; sequence SPTQAFDKDV…RTETDRVVAE (85 aa). Residues 58–149 are a coiled coil; sequence LEMFETMVNK…AQEELQLYKS (92 aa). Residues 115 to 185 enclose the RH2 domain; the sequence is RPRFTMQELK…ITEESKEKST (71 aa).

The protein belongs to the RILPL family.

It is found in the cytoplasm. The protein localises to the cytosol. It localises to the cytoskeleton. Its subcellular location is the microtubule organizing center. The protein resides in the centrosome. It is found in the cell projection. The protein localises to the cilium. Involved in cell shape and neuronal morphogenesis, positively regulating the establishment and maintenance of dendritic spines. Plays a role in cellular protein transport. The polypeptide is RILP-like protein 2 (rilpl2) (Danio rerio (Zebrafish)).